The sequence spans 204 residues: Recombination protein RecR (204 aa).

The C4-type zinc finger occupies Cys-58–Cys-75. A Toprim domain is found at Ser-83–Pro-181.

Belongs to the RecR family.

May play a role in DNA repair. It seems to be involved in an RecBC-independent recombinational process of DNA repair. It may act with RecF and RecO. In Chlorobaculum tepidum (strain ATCC 49652 / DSM 12025 / NBRC 103806 / TLS) (Chlorobium tepidum), this protein is Recombination protein RecR.